A 245-amino-acid chain; its full sequence is MKIDILSIFPDMFSGVTGNSIIKKAIENERVAVEVTDFREYAEGKHHIVDDYPYGGGAGMLLKAQPIFDAVQAVKEKQPETKPRVILMDPAGKRFDQKMAEEFAEEEHLVFICGHYEGYDERIREHLVTDEVSIGDYILTGGEIGAMIVMDSVIRLLPGVLGNKDSAVTDSFSTGLLEHPHYTRPADFRGMKVPDILLSGNHAWIEEWRDKESLKRTYERRPDLLKNYPLTDKQKTWLKEWSDSK.

S-adenosyl-L-methionine is bound by residues Gly-114 and 134 to 139 (IGDYIL).

Belongs to the RNA methyltransferase TrmD family. As to quaternary structure, homodimer.

The protein localises to the cytoplasm. The catalysed reaction is guanosine(37) in tRNA + S-adenosyl-L-methionine = N(1)-methylguanosine(37) in tRNA + S-adenosyl-L-homocysteine + H(+). Functionally, specifically methylates guanosine-37 in various tRNAs. In Listeria monocytogenes serotype 4b (strain CLIP80459), this protein is tRNA (guanine-N(1)-)-methyltransferase.